A 556-amino-acid chain; its full sequence is Oxygen-dependent choline dehydrogenase (556 aa).

Residue 4–33 coordinates FAD; that stretch reads DYIIIGAGSAGNVLATRLTEDPNTTVLLLE. The Proton acceptor role is filled by histidine 473.

The protein belongs to the GMC oxidoreductase family. FAD is required as a cofactor.

It catalyses the reaction choline + A = betaine aldehyde + AH2. It carries out the reaction betaine aldehyde + NAD(+) + H2O = glycine betaine + NADH + 2 H(+). The protein operates within amine and polyamine biosynthesis; betaine biosynthesis via choline pathway; betaine aldehyde from choline (cytochrome c reductase route): step 1/1. Functionally, involved in the biosynthesis of the osmoprotectant glycine betaine. Catalyzes the oxidation of choline to betaine aldehyde and betaine aldehyde to glycine betaine at the same rate. This Escherichia coli O17:K52:H18 (strain UMN026 / ExPEC) protein is Oxygen-dependent choline dehydrogenase.